Reading from the N-terminus, the 299-residue chain is Bifunctional protein FolD (299 aa).

Residues 168–170 (GRS), Ser193, and Ile234 contribute to the NADP(+) site.

The protein belongs to the tetrahydrofolate dehydrogenase/cyclohydrolase family. Homodimer.

It carries out the reaction (6R)-5,10-methylene-5,6,7,8-tetrahydrofolate + NADP(+) = (6R)-5,10-methenyltetrahydrofolate + NADPH. It catalyses the reaction (6R)-5,10-methenyltetrahydrofolate + H2O = (6R)-10-formyltetrahydrofolate + H(+). Its pathway is one-carbon metabolism; tetrahydrofolate interconversion. In terms of biological role, catalyzes the oxidation of 5,10-methylenetetrahydrofolate to 5,10-methenyltetrahydrofolate and then the hydrolysis of 5,10-methenyltetrahydrofolate to 10-formyltetrahydrofolate. This Agrobacterium fabrum (strain C58 / ATCC 33970) (Agrobacterium tumefaciens (strain C58)) protein is Bifunctional protein FolD.